The following is a 415-amino-acid chain: Mulatexin (415 aa).

The signal sequence occupies residues Met1–Ala21. The 44-residue stretch at Glu23 to Ser66 folds into the Chitin-binding type-1 1 domain. 4 cysteine pairs are disulfide-bonded: Cys26–Cys41, Cys35–Cys47, Cys40–Cys54, and Cys60–Cys64. The segment at Trp65–Arg127 is disordered. Residues Ser67–Pro121 are compositionally biased toward pro residues. Residues Asp125–Asn167 form the Chitin-binding type-1 2 domain. 4 disulfide bridges follow: Cys128–Cys143, Cys137–Cys149, Cys142–Cys156, and Cys161–Cys165. N-linked (GlcNAc...) asparagine glycosylation occurs at Asn264.

In terms of processing, glycosylated.

The protein localises to the secreted. In terms of biological role, chitin-binding protein which slows larval growth when consumed by the lepidopteran species S.ricini and M.brassica, but not when consumed by the mulberry specialist B.mori. Lacks chitinase activity. The chain is Mulatexin from Morus alba (White mulberry).